We begin with the raw amino-acid sequence, 547 residues long: Fumarate reductase (CoM/CoB) subunit A (547 aa).

Belongs to the FAD-dependent oxidoreductase 2 family. Subunit A of the heterodimeric fumarate reductase of methanogenic Archaea, composed of subunits A (TfrA) and B (TfrB). Requires an oxidized flavin as cofactor.

It is found in the cytoplasm. It catalyses the reaction coenzyme B + coenzyme M + fumarate = coenzyme M-coenzyme B heterodisulfide + succinate. Its function is as follows. Catalyzes the reduction of fumarate with reduced coenzyme M (CoM-S-H) and coenzyme B (CoB-S-H). In vitro, is able to reduces fumarate with reduced benzyl viologen, oxidize CoM-S-H and CoB-S-H to CoM-S-S-CoB with methylene blue, and reduce CoM-S-S-CoB with reduced benzyl viologen. The enzyme has specificity for the two thiol compounds as the CoB--CoM heterodisulfide reductase. The enzyme is very sensitive to oxygen. In Methanothermobacter marburgensis (strain ATCC BAA-927 / DSM 2133 / JCM 14651 / NBRC 100331 / OCM 82 / Marburg) (Methanobacterium thermoautotrophicum), this protein is Fumarate reductase (CoM/CoB) subunit A.